Consider the following 155-residue polypeptide: Ribonuclease H (155 aa).

Residues 4–145 form the RNase H type-1 domain; the sequence is NISKVVIYTD…ADKLAAQGRQ (142 aa). Asp13, Glu51, Asp73, and Asp137 together coordinate Mg(2+).

It belongs to the RNase H family. As to quaternary structure, monomer. Mg(2+) is required as a cofactor.

The protein localises to the cytoplasm. The catalysed reaction is Endonucleolytic cleavage to 5'-phosphomonoester.. Its function is as follows. Endonuclease that specifically degrades the RNA of RNA-DNA hybrids. The chain is Ribonuclease H from Rickettsia canadensis (strain McKiel).